A 426-amino-acid chain; its full sequence is Glutamate-1-semialdehyde 2,1-aminomutase (426 aa).

Lys-265 bears the N6-(pyridoxal phosphate)lysine mark.

It belongs to the class-III pyridoxal-phosphate-dependent aminotransferase family. HemL subfamily. As to quaternary structure, homodimer. Pyridoxal 5'-phosphate serves as cofactor.

Its subcellular location is the cytoplasm. The enzyme catalyses (S)-4-amino-5-oxopentanoate = 5-aminolevulinate. It participates in porphyrin-containing compound metabolism; protoporphyrin-IX biosynthesis; 5-aminolevulinate from L-glutamyl-tRNA(Glu): step 2/2. This chain is Glutamate-1-semialdehyde 2,1-aminomutase, found in Marinobacter nauticus (strain ATCC 700491 / DSM 11845 / VT8) (Marinobacter aquaeolei).